We begin with the raw amino-acid sequence, 253 residues long: MNLTDKTVLITGGASGIGYAAVQAFLNQQANVVVADIDEAQGEAMIRKENNDRLHFVHTDITDEPACQNAIRSAVDKFGGLDVLINNAGIEIVAPIHEMELSNWNKVLNVNLTGMFLMSKHALKYMLKSGKGNIINTCSVGGVVAWPDIPAYNASKGGVLQLTRSMAVDYAKHNIRVNCVCPGIIDTPLNEKSFLENNEGTLEEIKKEKAKVNPLLRLGKPEEIANVMLFLASDLSSYMTGSAITADGGYTAQ.

An NAD(+)-binding site is contributed by 9–31 (LITGGASGIGYAAVQAFLNQQAN). Ser-139 contributes to the substrate binding site. Tyr-152 functions as the Proton acceptor in the catalytic mechanism.

This sequence belongs to the short-chain dehydrogenases/reductases (SDR) family.

The catalysed reaction is L-dihydroanticapsin + NAD(+) = L-anticapsin + NADH + H(+). It functions in the pathway antibiotic biosynthesis; bacilysin biosynthesis. Its function is as follows. Part of the bacABCDEFG operon responsible for the biosynthesis of bacilysin, an irreversible inactivator of the glutaminase domain of glucosamine synthetase. Catalyzes the dehydrogenation of the C7-hydroxyl group in the 4S-tetrahydrotyrosine (4S-H4Tyr) to yield anticapsin (epoxycyclohexanonyl-Ala). This chain is Dihydroanticapsin 7-dehydrogenase, found in Bacillus subtilis.